Consider the following 363-residue polypeptide: Protein-arginine kinase (363 aa).

Residues Ile-24–Ala-254 enclose the Phosphagen kinase C-terminal domain. Residues Ser-27 to Arg-31, His-92, Arg-125, Arg-176 to Met-180, and Arg-207 to Glu-212 each bind ATP. The RDXXRA motif of the pArg binding pocket involved in allosteric regulation signature appears at Arg-337 to Ala-342.

It belongs to the ATP:guanido phosphotransferase family.

The enzyme catalyses L-arginyl-[protein] + ATP = N(omega)-phospho-L-arginyl-[protein] + ADP + H(+). Its activity is regulated as follows. Appears to be allosterically activated by the binding of pArg-containing polypeptides to the pArg-binding pocket localized in the C-terminal domain of McsB. Its function is as follows. Catalyzes the specific phosphorylation of arginine residues in a large number of proteins. Is part of the bacterial stress response system. Protein arginine phosphorylation has a physiologically important role and is involved in the regulation of many critical cellular processes, such as protein homeostasis, motility, competence, and stringent and stress responses, by regulating gene expression and protein activity. The sequence is that of Protein-arginine kinase from Bacillus velezensis (strain DSM 23117 / BGSC 10A6 / LMG 26770 / FZB42) (Bacillus amyloliquefaciens subsp. plantarum).